Consider the following 292-residue polypeptide: Probable 2-(5''-triphosphoribosyl)-3'-dephosphocoenzyme-A synthase (292 aa).

Belongs to the CitG/MdcB family.

The enzyme catalyses 3'-dephospho-CoA + ATP = 2'-(5''-triphospho-alpha-D-ribosyl)-3'-dephospho-CoA + adenine. The sequence is that of Probable 2-(5''-triphosphoribosyl)-3'-dephosphocoenzyme-A synthase from Shigella flexneri serotype 5b (strain 8401).